The following is a 144-amino-acid chain: Peptide methionine sulfoxide reductase MsrB (144 aa).

Residues 5–128 (KEELRQRIGE…NSAALQFIPV (124 aa)) enclose the MsrB domain. The active-site Nucleophile is Cys-117.

It belongs to the MsrB Met sulfoxide reductase family.

The enzyme catalyses L-methionyl-[protein] + [thioredoxin]-disulfide + H2O = L-methionyl-(R)-S-oxide-[protein] + [thioredoxin]-dithiol. This is Peptide methionine sulfoxide reductase MsrB from Ligilactobacillus salivarius (strain UCC118) (Lactobacillus salivarius).